An 81-amino-acid chain; its full sequence is Sulfur carrier protein TusA (81 aa).

Catalysis depends on cysteine 19, which acts as the Cysteine persulfide intermediate.

It belongs to the sulfur carrier protein TusA family.

Its subcellular location is the cytoplasm. Its function is as follows. Sulfur carrier protein which probably makes part of a sulfur-relay system. In Aeromonas salmonicida (strain A449), this protein is Sulfur carrier protein TusA.